A 370-amino-acid polypeptide reads, in one-letter code: Protein DVU_0535 (370 aa).

Residues 1–258 (MDRRRFLTLL…EELGTKSAPE (258 aa)) are Cytoplasmic-facing. 3 4Fe-4S ferredoxin-type domains span residues 40–70 (YGVL…APKA), 101–132 (DHPV…KNPD), and 133–162 (GSVT…FQYA). Residues C49, C52, C55, C59, C110, C113, C118, C122, C142, C145, C148, C152, C172, C175, C187, and C191 each coordinate [4Fe-4S] cluster. Residues 259–284 (YTAGALGAVPMVVGIWPILLTGAYAI) form a helical membrane-spanning segment. The Periplasmic portion of the chain corresponds to 285 to 370 (TKRKEKIAAE…DDAGKPGEDA (86 aa)). Over residues 345–355 (FEEELAAKEQP) the composition is skewed to basic and acidic residues. A disordered region spans residues 345 to 370 (FEEELAAKEQPEAPEGDDAGKPGEDA).

It is found in the cell membrane. Functionally, HMWC (high-molecular-weight cytochrome c precursor), ORF2, ORF3, ORF4, ORF5, ORF6 in the HMC operon form a transmembrane protein complex that allows electron flow from the periplasmic hydrogenase to the cytoplasmic enzymes that catalyze reduction of sulfates. ORF2 is a transmembrane redox protein. This chain is Protein DVU_0535, found in Nitratidesulfovibrio vulgaris (strain ATCC 29579 / DSM 644 / CCUG 34227 / NCIMB 8303 / VKM B-1760 / Hildenborough) (Desulfovibrio vulgaris).